Reading from the N-terminus, the 321-residue chain is Lipoyl synthase (321 aa).

Positions 68, 73, 79, 94, 98, 101, and 308 each coordinate [4Fe-4S] cluster. Residues 80–297 (FNHGTATFMI…KVLADELGFT (218 aa)) form the Radical SAM core domain.

Belongs to the radical SAM superfamily. Lipoyl synthase family. [4Fe-4S] cluster is required as a cofactor.

Its subcellular location is the cytoplasm. The catalysed reaction is [[Fe-S] cluster scaffold protein carrying a second [4Fe-4S](2+) cluster] + N(6)-octanoyl-L-lysyl-[protein] + 2 oxidized [2Fe-2S]-[ferredoxin] + 2 S-adenosyl-L-methionine + 4 H(+) = [[Fe-S] cluster scaffold protein] + N(6)-[(R)-dihydrolipoyl]-L-lysyl-[protein] + 4 Fe(3+) + 2 hydrogen sulfide + 2 5'-deoxyadenosine + 2 L-methionine + 2 reduced [2Fe-2S]-[ferredoxin]. It participates in protein modification; protein lipoylation via endogenous pathway; protein N(6)-(lipoyl)lysine from octanoyl-[acyl-carrier-protein]: step 2/2. In terms of biological role, catalyzes the radical-mediated insertion of two sulfur atoms into the C-6 and C-8 positions of the octanoyl moiety bound to the lipoyl domains of lipoate-dependent enzymes, thereby converting the octanoylated domains into lipoylated derivatives. This chain is Lipoyl synthase, found in Shewanella sp. (strain MR-7).